The chain runs to 91 residues: Putative regulatory protein Cphy_2880 (91 aa).

This sequence belongs to the RemA family.

The protein is Putative regulatory protein Cphy_2880 of Lachnoclostridium phytofermentans (strain ATCC 700394 / DSM 18823 / ISDg) (Clostridium phytofermentans).